We begin with the raw amino-acid sequence, 278 residues long: Extracellular metalloprotease MCYG_03238 (278 aa).

Residues 1–19 form the signal peptide; it reads MRFSIVLSSIAALSSVAAA. N-linked (GlcNAc...) asparagine glycosylation is present at Asn-52. His-170 serves as a coordination point for Zn(2+). The active site involves Glu-171. His-174 lines the Zn(2+) pocket. Residues Cys-209 and Cys-255 are joined by a disulfide bond.

This sequence belongs to the peptidase M43B family.

The protein localises to the secreted. Secreted metalloproteinase that allows assimilation of proteinaceous substrates. Plays a pivotal role as a pathogenicity determinant during infections and contributes to the ability of the pathogen to persist within the mammalian host. The polypeptide is Extracellular metalloprotease MCYG_03238 (Arthroderma otae (strain ATCC MYA-4605 / CBS 113480) (Microsporum canis)).